We begin with the raw amino-acid sequence, 205 residues long: CASP-like protein 3A1 (205 aa).

The Cytoplasmic segment spans residues 1 to 39 (MGIGMDSSTMSGPLVAHSGILDGDYEKRPAVCKMQMRFD). A helical membrane pass occupies residues 40-60 (LANVGLRVLSLACSLVALVSM). Residues 61–89 (ASNQESGVVTVFGFKLPVYSKWSYSDSFE) are Extracellular-facing. A helical membrane pass occupies residues 90-110 (FLVGASAAAAAHSLLQLLLCG). Over 111–125 (MKMVKRASTIPSRNH) the chain is Cytoplasmic. The helical transmembrane segment at 126–146 (AWLLFAGDQVFAYGMLAAASA) threads the bilayer. Topologically, residues 147-176 (AAGVTNLNRTGFRHSDLPNFCKPLHRFCDK) are extracellular. A glycan (N-linked (GlcNAc...) asparagine) is linked at asparagine 154. The chain crosses the membrane as a helical span at residues 177-197 (AAISIVFAFISSLILGGSAVL). Residues 198–205 (DVFWLSKN) lie on the Cytoplasmic side of the membrane.

Belongs to the Casparian strip membrane proteins (CASP) family. Homodimer and heterodimers.

Its subcellular location is the cell membrane. This Picea sitchensis (Sitka spruce) protein is CASP-like protein 3A1.